Consider the following 280-residue polypeptide: Beta-lactamase OXA-58 (280 aa).

Positions 1–18 are cleaved as a signal peptide; the sequence is MKLLKILSLVCLSISIGA. A lipid anchor (N-palmitoyl cysteine) is attached at cysteine 19. Cysteine 19 carries the S-diacylglycerol cysteine lipid modification. Catalysis depends on serine 83, which acts as the Acyl-ester intermediate. Serine 83, lysine 86, serine 130, serine 221, tryptophan 223, and arginine 263 together coordinate a beta-lactam. Position 86 is an N6-carboxylysine (lysine 86).

It belongs to the class-D beta-lactamase family. As to quaternary structure, monomer. Dimer. Post-translationally, carboxylated on the epsilon-amino group of a lysine, with the resulting carbamate functional group serving as a general base. Probably N-carboxylated at Lys-86 at neutral pH in vivo and undergoes complete N-decarboxylation, at pH 4.1, in vitro. N-carboxylation at Lys-86 probably increases catalytic activity under physiological conditions.

It is found in the cell membrane. It carries out the reaction a beta-lactam + H2O = a substituted beta-amino acid. Activated approximately 3-fold by the presence of 0.1M NaHCO3. Its function is as follows. Class D beta-lactamase which confers resistance to the beta-lactam antibiotics, including penicillins and oxacillin, and moderate resistance to carbapenems such as imipenem; in the DH10B strain of E.coli. Acts via hydrolysis of the beta-lactam ring. Has benzylpenicillin-, oxacillin-, cephalothin- and imipenem-hydrolyzing activities. This Acinetobacter baumannii protein is Beta-lactamase OXA-58.